Reading from the N-terminus, the 450-residue chain is Tubulin alpha-3E chain (450 aa).

The MREC motif motif lies at 1–4 (MREC). Gln-11 is a binding site for GTP. Lys-40 is subject to N6-acetyllysine. Residues Glu-71, Ser-140, Gly-144, Thr-145, Thr-179, Asn-206, and Asn-228 each contribute to the GTP site. Glu-71 lines the Mg(2+) pocket. Glu-254 is a catalytic residue. Tyr-282 carries the post-translational modification 3'-nitrotyrosine. At Ser-439 the chain carries Phosphoserine. At Tyr-450 the chain carries 3'-nitrotyrosine.

It belongs to the tubulin family. As to quaternary structure, dimer of alpha and beta chains. A typical microtubule is a hollow water-filled tube with an outer diameter of 25 nm and an inner diameter of 15 nM. Alpha-beta heterodimers associate head-to-tail to form protofilaments running lengthwise along the microtubule wall with the beta-tubulin subunit facing the microtubule plus end conferring a structural polarity. Microtubules usually have 13 protofilaments but different protofilament numbers can be found in some organisms and specialized cells. It depends on Mg(2+) as a cofactor. Some glutamate residues at the C-terminus are polyglutamylated, resulting in polyglutamate chains on the gamma-carboxyl group. Polyglutamylation plays a key role in microtubule severing by spastin (SPAST). SPAST preferentially recognizes and acts on microtubules decorated with short polyglutamate tails: severing activity by SPAST increases as the number of glutamates per tubulin rises from one to eight, but decreases beyond this glutamylation threshold. Glutamylation is also involved in cilia motility. In terms of processing, some glutamate residues at the C-terminus are monoglycylated but not polyglycylated due to the absence of functional TTLL10 in human. Monoglycylation is mainly limited to tubulin incorporated into cilia and flagella axonemes, which is required for their stability and maintenance. Flagella glycylation controls sperm motility. Both polyglutamylation and monoglycylation can coexist on the same protein on adjacent residues, and lowering glycylation levels increases polyglutamylation, and reciprocally. Post-translationally, acetylation of alpha chains at Lys-40 is located inside the microtubule lumen. This modification has been correlated with increased microtubule stability, intracellular transport and ciliary assembly. Methylation of alpha chains at Lys-40 is found in mitotic microtubules and is required for normal mitosis and cytokinesis contributing to genomic stability. In terms of processing, nitration of Tyr-450 is irreversible and interferes with normal dynein intracellular distribution. Post-translationally, undergoes a tyrosination/detyrosination cycle, the cyclic removal and re-addition of a C-terminal tyrosine residue by the enzymes tubulin tyrosine carboxypeptidase (MATCAP1/KIAA0895L, VASH1 or VASH2) and tubulin tyrosine ligase (TTL), respectively. Tyrosination promotes microtubule interaction with CAP-Gly domain-containing proteins such as CLIP1, CLIP2 and DCTN1. Tyrosination regulates the initiation of dynein-dynactin motility via interaction with DCTN1, which brings the dynein-dynactin complex into contact with microtubules. In neurons, tyrosinated tubulins mediate the initiation of retrograde vesicle transport. In terms of processing, detyrosination is involved in metaphase plate congression by guiding chromosomes during mitosis: detyrosination promotes interaction with CENPE, promoting pole-proximal transport of chromosomes toward the equator. Detyrosination increases microtubules-dependent mechanotransduction in dystrophic cardiac and skeletal muscle. In cardiomyocytes, detyrosinated microtubules are required to resist to contractile compression during contraction: detyrosination promotes association with desmin (DES) at force-generating sarcomeres, leading to buckled microtubules and mechanical resistance to contraction.

Its subcellular location is the cytoplasm. The protein localises to the cytoskeleton. It catalyses the reaction GTP + H2O = GDP + phosphate + H(+). In terms of biological role, tubulin is the major constituent of microtubules, a cylinder consisting of laterally associated linear protofilaments composed of alpha- and beta-tubulin heterodimers. Microtubules grow by the addition of GTP-tubulin dimers to the microtubule end, where a stabilizing cap forms. Below the cap, tubulin dimers are in GDP-bound state, owing to GTPase activity of alpha-tubulin. The chain is Tubulin alpha-3E chain (TUBA3E) from Homo sapiens (Human).